Here is a 578-residue protein sequence, read N- to C-terminus: Proline--tRNA ligase (578 aa).

Belongs to the class-II aminoacyl-tRNA synthetase family. ProS type 1 subfamily. In terms of assembly, homodimer.

The protein localises to the cytoplasm. The catalysed reaction is tRNA(Pro) + L-proline + ATP = L-prolyl-tRNA(Pro) + AMP + diphosphate. Catalyzes the attachment of proline to tRNA(Pro) in a two-step reaction: proline is first activated by ATP to form Pro-AMP and then transferred to the acceptor end of tRNA(Pro). As ProRS can inadvertently accommodate and process non-cognate amino acids such as alanine and cysteine, to avoid such errors it has two additional distinct editing activities against alanine. One activity is designated as 'pretransfer' editing and involves the tRNA(Pro)-independent hydrolysis of activated Ala-AMP. The other activity is designated 'posttransfer' editing and involves deacylation of mischarged Ala-tRNA(Pro). The misacylated Cys-tRNA(Pro) is not edited by ProRS. This Syntrophus aciditrophicus (strain SB) protein is Proline--tRNA ligase.